A 432-amino-acid polypeptide reads, in one-letter code: Adenylosuccinate synthetase (432 aa).

GTP-binding positions include 12–18 (GDEGKGK) and 40–42 (GHT). Asp-13 acts as the Proton acceptor in catalysis. Mg(2+)-binding residues include Asp-13 and Gly-40. IMP is bound by residues 13 to 16 (DEGK), 38 to 41 (NAGH), Thr-126, Arg-140, Gln-219, Thr-234, and Arg-300. His-41 (proton donor) is an active-site residue. Position 296–302 (296–302 (STTGRPR)) interacts with substrate. Residues Arg-302, 328-330 (KLD), and 410-412 (STG) contribute to the GTP site.

It belongs to the adenylosuccinate synthetase family. In terms of assembly, homodimer. The cofactor is Mg(2+).

It localises to the cytoplasm. It carries out the reaction IMP + L-aspartate + GTP = N(6)-(1,2-dicarboxyethyl)-AMP + GDP + phosphate + 2 H(+). It participates in purine metabolism; AMP biosynthesis via de novo pathway; AMP from IMP: step 1/2. Its function is as follows. Plays an important role in the de novo pathway of purine nucleotide biosynthesis. Catalyzes the first committed step in the biosynthesis of AMP from IMP. The sequence is that of Adenylosuccinate synthetase from Aquifex aeolicus (strain VF5).